A 605-amino-acid polypeptide reads, in one-letter code: Zinc metalloproteinase-disintegrin-like BfMP (605 aa).

The signal sequence occupies residues 1–11; sequence MLVVFPYQGSS. A propeptide spanning residues 12–179 is cleaved from the precursor; sequence IILESGNVND…WESDEPFKNT (168 aa). Residues Asn-178 and Asn-215 are each glycosylated (N-linked (GlcNAc...) asparagine). Residues 196–392 enclose the Peptidase M12B domain; it reads KYIEFYVAVD…DRPQCILNKP (197 aa). Disulfide bonds link Cys-307–Cys-387, Cys-347–Cys-371, Cys-350–Cys-355, Cys-403–Cys-432, Cys-414–Cys-427, Cys-416–Cys-422, Cys-426–Cys-449, Cys-440–Cys-446, Cys-445–Cys-471, Cys-458–Cys-478, Cys-465–Cys-497, Cys-490–Cys-502, Cys-509–Cys-559, Cys-524–Cys-567, Cys-537–Cys-547, Cys-554–Cys-593, and Cys-587–Cys-598. His-332 serves as a coordination point for Zn(2+). The active site involves Glu-333. 2 residues coordinate Zn(2+): His-336 and His-342. The Disintegrin domain maps to 400-486; it reads PAICGNYFVE…ECPTDIFRRN (87 aa). The D/ECD-tripeptide motif lies at 464-466; it reads DCD.

This sequence belongs to the venom metalloproteinase (M12B) family. P-III subfamily. P-IIIa sub-subfamily. As to quaternary structure, monomer. The cofactor is Zn(2+). Expressed by the venom gland.

It is found in the secreted. Snake venom zinc metalloproteinase that inhibits platelet aggregation and degrades fibrinogen. This is Zinc metalloproteinase-disintegrin-like BfMP from Bungarus fasciatus (Banded krait).